Consider the following 97-residue polypeptide: Na(+)/H(+) antiporter subunit F1 (97 aa).

A run of 3 helical transmembrane segments spans residues 3 to 23 (HNVI…AMLI), 35 to 55 (VVAL…FSIL), and 60 to 80 (YMIV…AVFS).

The protein belongs to the CPA3 antiporters (TC 2.A.63) subunit F family. May form a heterooligomeric complex that consists of seven subunits: mnhA1, mnhB1, mnhC1, mnhD1, mnhE1, mnhF1 and mnhG1.

The protein localises to the cell membrane. In terms of biological role, mnh complex is a Na(+)/H(+) antiporter involved in Na(+) excretion. In Staphylococcus aureus (strain Mu3 / ATCC 700698), this protein is Na(+)/H(+) antiporter subunit F1 (mnhF1).